The following is a 251-amino-acid chain: Ubiquinone/menaquinone biosynthesis C-methyltransferase UbiE (251 aa).

Residues Thr-74, Asp-95, 123 to 124 (NA), and Ser-140 each bind S-adenosyl-L-methionine.

The protein belongs to the class I-like SAM-binding methyltransferase superfamily. MenG/UbiE family.

The enzyme catalyses a 2-demethylmenaquinol + S-adenosyl-L-methionine = a menaquinol + S-adenosyl-L-homocysteine + H(+). It catalyses the reaction a 2-methoxy-6-(all-trans-polyprenyl)benzene-1,4-diol + S-adenosyl-L-methionine = a 5-methoxy-2-methyl-3-(all-trans-polyprenyl)benzene-1,4-diol + S-adenosyl-L-homocysteine + H(+). It participates in quinol/quinone metabolism; menaquinone biosynthesis; menaquinol from 1,4-dihydroxy-2-naphthoate: step 2/2. It functions in the pathway cofactor biosynthesis; ubiquinone biosynthesis. In terms of biological role, methyltransferase required for the conversion of demethylmenaquinol (DMKH2) to menaquinol (MKH2) and the conversion of 2-polyprenyl-6-methoxy-1,4-benzoquinol (DDMQH2) to 2-polyprenyl-3-methyl-6-methoxy-1,4-benzoquinol (DMQH2). This chain is Ubiquinone/menaquinone biosynthesis C-methyltransferase UbiE, found in Pectobacterium carotovorum subsp. carotovorum (strain PC1).